The chain runs to 252 residues: Phosphomannomutase (252 aa).

Residue aspartate 13 is the Nucleophile of the active site. Aspartate 13 and aspartate 15 together coordinate Mg(2+). The Proton donor/acceptor role is filled by aspartate 15. Residues arginine 22, arginine 124, arginine 135, arginine 142, serine 180, and aspartate 182 each contribute to the alpha-D-mannose 1-phosphate site. Positions 208, 220, and 225 each coordinate Mg(2+).

The protein belongs to the eukaryotic PMM family. As to quaternary structure, homodimer. The cofactor is Mg(2+).

It localises to the cytoplasm. It catalyses the reaction alpha-D-mannose 1-phosphate = D-mannose 6-phosphate. The protein operates within nucleotide-sugar biosynthesis; GDP-alpha-D-mannose biosynthesis; alpha-D-mannose 1-phosphate from D-fructose 6-phosphate: step 2/2. In terms of biological role, catalyzes the interconversion of mannose-6-phosphate to mannose-1-phosphate, the precursor for the synthesis of GDP-mannose. GDP-mannose is an essential sugar nucleotide for the synthesis of D-mannose-containing cell wall polysaccharides (galactomannans and glucomannans), glycolipids, glycoproteins and the antioxidant L-ascorbate. Can complement the yeast temperature-sensitive mutant sec53-6. The protein is Phosphomannomutase of Solanum lycopersicum (Tomato).